A 265-amino-acid chain; its full sequence is Aquaporin-5 (265 aa).

The Cytoplasmic segment spans residues 1–12 (MKKEVCSVAFFK). The chain crosses the membrane as a helical span at residues 13–33 (AVFAEFLATLIFVFFGLGSAL). Residues 34–39 (KWPSAL) lie on the Extracellular side of the membrane. A helical transmembrane segment spans residues 40–60 (PTILQISIAFGLAIGTLAQAL). Residues 61 to 65 (GPVSG) lie on the Cytoplasmic side of the membrane. The segment at residues 66–74 (GHINPAITL) is an intramembrane region (discontinuously helical). The NPA 1 signature appears at 69-71 (NPA). Residues 75–87 (ALLIGNQISLLRA) are Cytoplasmic-facing. The chain crosses the membrane as a helical span at residues 88–108 (IFYVAAQLVGAIAGAGILYWL). Over 109–126 (APGNARGNLAVNALSNNT) the chain is Extracellular. Asn-124 carries N-linked (GlcNAc...) asparagine glycosylation. The helical transmembrane segment at 127 to 147 (TPGKAVVVELILTFQLALCIF) threads the bilayer. The Cytoplasmic segment spans residues 148–158 (SSTDSRRTSPV). A helical transmembrane segment spans residues 159-179 (GSPALSIGLSVTLGHLVGIYF). A topological domain (extracellular) is located at residue Thr-180. Residues 181–191 (GCSMNPARSFG) constitute an intramembrane region (discontinuously helical). An NPA 2 motif is present at residues 185 to 187 (NPA). Over 192 to 203 (PAVVMNRFSPSH) the chain is Extracellular. Residues 204-224 (WVFWVGPIVGAVLAAILYFYL) traverse the membrane as a helical segment. Residues 225 to 265 (LFPSSLSLHDRVAVVKGTYEPEEDWEDHREERKKTIELTAH) are Cytoplasmic-facing.

This sequence belongs to the MIP/aquaporin (TC 1.A.8) family. As to quaternary structure, homotetramer; each monomer provides an independent water pore. Interacts with TRPV4; the interaction is probably indirect and regulates TRPV4 activation by hypotonicity. As to expression, detected at the luminal membrane of secretory epithelial cells in hindpaw sweat glands. Detected in acinar cells in salivary glands, in duct cells in lacrimal glands and in lung (at protein level). Detected in lung, parotid, submandibular, sublingual, and lacrimal gland tissues.

Its subcellular location is the apical cell membrane. The protein localises to the cell membrane. The protein resides in the cytoplasmic vesicle membrane. The catalysed reaction is H2O(in) = H2O(out). In terms of biological role, aquaporins form homotetrameric transmembrane channels, with each monomer independently mediating water transport across the plasma membrane along its osmotic gradient. Plays an important role in fluid secretion in salivary glands. Required for TRPV4 activation by hypotonicity. Together with TRPV4, controls regulatory volume decrease in salivary epithelial cells. Seems to play a redundant role in water transport in the eye, lung and in sweat glands. This is Aquaporin-5 from Mus musculus (Mouse).